The chain runs to 259 residues: Protein IQ-DOMAIN 10 (259 aa).

The disordered stretch occupies residues 18 to 39 (KNKSNRGNVHSETSNRVKPVES). An IQ domain is found at 50–77 (EVAVIRIQKAFRAFKARKRLCSLKSARR). Positions 61–71 (RAFKARKRLCS) are calmodulin-binding. The interval 226–259 (KPSKKPEKSSPNNVITKTSAKPDEVGNSKKPGSG) is disordered.

It belongs to the IQD family. In terms of assembly, binds to multiple calmodulin (CaM) in the presence of Ca(2+) and CaM-like proteins.

The protein localises to the nucleus. The protein resides in the cytoplasm. It is found in the cytoskeleton. May be involved in cooperative interactions with calmodulins or calmodulin-like proteins. Recruits calmodulin proteins to microtubules, thus being a potential scaffold in cellular signaling and trafficking. May associate with nucleic acids and regulate gene expression at the transcriptional or post-transcriptional level. This is Protein IQ-DOMAIN 10 from Arabidopsis thaliana (Mouse-ear cress).